The chain runs to 525 residues: Heat shock factor protein 1 (525 aa).

M1 carries the post-translational modification N-acetylmethionine. A DNA-binding domain region spans residues 15–120 (VPAFLTKLWT…LLENIKRKVT (106 aa)). K80 bears the N6-acetyllysine mark. Position 91 is an N6-acetyllysine; alternate (K91). K91 is covalently cross-linked (Glycyl lysine isopeptide (Lys-Gly) (interchain with G-Cter in SUMO2); alternate). K118 carries the post-translational modification N6-acetyllysine. Position 121 is a phosphoserine; by MAPKAPK2 (S121). Residues K126 and K131 each participate in a glycyl lysine isopeptide (Lys-Gly) (interchain with G-Cter in SUMO2) cross-link. Positions 130–203 (IKIRQDSVTR…ISLVQSNRIL (74 aa)) are hydrophobic repeat HR-A/B. T142 carries the post-translational modification Phosphothreonine; by CK2. 2 positions are modified to N6-acetyllysine: K150 and K188. Residues 203-224 (LGVKRKIPLMLSDSNSAHSVPK) are d domain. K208 carries the N6-acetyllysine; alternate modification. A Glycyl lysine isopeptide (Lys-Gly) (interchain with G-Cter in SUMO2); alternate cross-link involves residue K208. A Phosphoserine; by PLK1 modification is found at S216. The tract at residues 221-310 (SVPKYGRQYS…PPSPPHSPRV (90 aa)) is regulatory domain. Residue K224 forms a Glycyl lysine isopeptide (Lys-Gly) (interchain with G-Cter in SUMO2) linkage. Residue S230 is modified to Phosphoserine; by CAMK2A. Disordered regions lie at residues 272–327 (APTS…PLSP) and 340–365 (PTPA…TPST). Phosphoserine is present on residues S275 and S292. K298 bears the N6-acetyllysine; alternate mark. Residue K298 forms a Glycyl lysine isopeptide (Lys-Gly) (interchain with G-Cter in SUMO2); alternate linkage. Residue K298 forms a Glycyl lysine isopeptide (Lys-Gly) (interchain with G-Cter in SUMO); alternate linkage. 4 positions are modified to phosphoserine: S303, S307, S314, and S319. S320 is modified (phosphoserine; by PKA). Position 323 is a phosphothreonine (T323). S326 carries the phosphoserine; by MAPK12 modification. The segment covering 343–355 (AASNTAPMDTTGA) has biased composition (polar residues). Residue S345 is modified to Phosphoserine. The interval 367 to 525 (EKCLSVACLD…PHKAKDPTVS (159 aa)) is transactivation domain. The segment at 380–405 (LSDHLDAMDSNLDNLQTMLTSHGFSV) is hydrophobic repeat HR-C. Positions 408–416 (SALLDLFSP) match the 9aaTAD motif. At S415 the chain carries Phosphoserine; by PLK1. S440 is modified (phosphoserine). Disordered stretches follow at residues 441–460 (PQEP…SGKQ) and 495–525 (YFSE…PTVS). Residues 515–525 (EPHKAKDPTVS) are compositionally biased toward basic and acidic residues. K520 bears the N6-acetyllysine mark.

Belongs to the HSF family. As to quaternary structure, monomer; cytoplasmic latent and transcriptionally inactive monomeric form in unstressed cells. Homotrimer; in response to stress, such as heat shock, homotrimerizes and translocates into the nucleus, binds to heat shock element (HSE) sequences in promoter of heat shock protein (HSP) genes and acquires transcriptional ability. Interacts (via monomeric form) with FKBP4; this interaction occurs in unstressed cells. Associates (via monomeric form) with HSP90 proteins in a multichaperone complex in unnstressed cell; this association maintains HSF1 in a non-DNA-binding and transcriptional inactive form by preventing HSF1 homotrimerization. Homotrimeric transactivation activity is modulated by protein-protein interactions and post-translational modifications. Interacts with HSP90AA1; this interaction is decreased in a IER5-dependent manner, promoting HSF1 accumulation in the nucleus, homotrimerization and DNA-binding activities. Part (via regulatory domain in the homotrimeric form) of a large heat shock-induced HSP90-dependent multichaperone complex at least composed of FKBP4, FKBP5, HSP90 proteins, PPID, PPP5C and PTGES3; this association maintains the HSF1 homotrimeric DNA-bound form in a transcriptionally inactive form. Interacts with BAG3 (via BAG domain); this interaction occurs in normal and heat-shocked cells promoting nuclear shuttling of HSF1 in a BAG3-dependent manner. Interacts (via homotrimeric and hyperphosphorylated form) with FKBP4; this interaction occurs upon heat shock in a HSP90-dependent multichaperone complex. Interacts (via homotrimeric form preferentially) with EEF1A proteins. In heat shocked cells, stress-denatured proteins compete with HSF1 homotrimeric DNA-bound form for association of the HSP90-dependent multichaperone complex, and hence alleviating repression of HSF1-mediated transcriptional activity. Interacts (via homotrimeric form preferentially) with DAXX; this interaction relieves homotrimeric HSF1 from repression of its transcriptional activity by HSP90-dependent multichaperone complex upon heat shock. Interacts (via D domain and preferentially with hyperphosphorylated form) with JNK1; this interaction occurs under both normal growth conditions and immediately upon heat shock. Interacts (via D domain and preferentially with hyperphosphorylated form) with MAPK3; this interaction occurs upon heat shock. Interacts with IER5 (via central region); this interaction promotes PPP2CA-induced dephosphorylation on Ser-121, Ser-307, Ser-314 and Thr-323 and HSF1 transactivation activity. Found in a ribonucleoprotein complex composed of the HSF1 homotrimeric form, translation elongation factor eEF1A proteins and non-coding RNA heat shock RNA-1 (HSR1); this complex occurs upon heat shock and stimulates HSF1 DNA-binding activity. Interacts (via transactivation domain) with HSPA1A/HSP70 and DNAJB1; these interactions result in the inhibition of heat shock- and HSF1-induced transcriptional activity during the attenuation and recovery phase from heat shock. Interacts (via Ser-303 and Ser-307 phosphorylated form) with YWHAE; this interaction promotes HSF1 sequestration in the cytoplasm in an ERK-dependent manner. Found in a complex with IER5 and PPP2CA. Interacts with TPR; this interaction increases upon heat shock and stimulates export of HSP70 mRNA. Interacts with SYMPK (via N-terminus) and CSTF2; these interactions occur upon heat shock. Interacts (via transactivation domain) with HSPA8. Interacts with EEF1D; this interaction occurs at heat shock promoter element (HSE) sequences. Interacts with MAPKAPK2. Interacts with PRKACA/PKA. Interacts (via transactivation domain) with GTF2A2. Interacts (via transactivation domain) with GTF2B. Interacts (via transactivation domain) with TBP. Interacts with CDK9, CCNT1 and EP300. Interacts (via N-terminus) with XRCC5 (via N-terminus) and XRCC6 (via N-terminus); these interactions are direct and prevent XRCC5/XRCC6 heterodimeric binding and non-homologous end joining (NHEJ) repair activities induced by ionizing radiation (IR). Interacts with PLK1; this interaction occurs during the early mitotic period, increases upon heat shock but does not modulate neither HSF1 homotrimerization and DNA-binding activities. Interacts (via Ser-216 phosphorylated form) with CDC20; this interaction occurs in mitosis in a MAD2L1-dependent manner and prevents PLK1-stimulated degradation of HSF1 by blocking the recruitment of the SCF(BTRC) ubiquitin ligase complex. Interacts with MAD2L1; this interaction occurs in mitosis. Interacts with BTRC; this interaction occurs during mitosis, induces its ubiquitin-dependent degradation following stimulus-dependent phosphorylation at Ser-216, a process inhibited by CDC20. Interacts with HSP90AA1 and HSP90AB1. Forms a complex with TTC5/STRAP and p300/EP300; these interactions augment chromatin-bound HSF1 and p300/EP300 histone acetyltransferase activity. Phosphorylated. Phosphorylated in unstressed cells; this phosphorylation is constitutive and implicated in the repression of HSF1 transcriptional activity. Phosphorylated on Ser-121 by MAPKAPK2; this phosphorylation promotes interaction with HSP90 proteins and inhibits HSF1 homotrimerization, DNA-binding and transactivation activities. Phosphorylation on Ser-303 by GSK3B/GSK3-beat and on Ser-307 by MAPK3 within the regulatory domain is involved in the repression of HSF1 transcriptional activity and occurs in a RAF1-dependent manner. Phosphorylation on Ser-303 and Ser-307 increases HSF1 nuclear export in a YWHAE- and XPO1/CRM1-dependent manner. Phosphorylation on Ser-307 is a prerequisite for phosphorylation on Ser-303. According to, Ser-303 is not phosphorylated in unstressed cells. Phosphorylated on Ser-415 by PLK1; phosphorylation promotes nuclear translocation upon heat shock. Hyperphosphorylated upon heat shock and during the attenuation and recovery phase period of the heat shock response. Phosphorylated on Thr-142; this phosphorylation increases HSF1 transactivation activity upon heat shock. Phosphorylation on Ser-230 by CAMK2A; this phosphorylation enhances HSF1 transactivation activity upon heat shock. Phosphorylation on Ser-326 by MAPK12; this phosphorylation enhances HSF1 nuclear translocation, homotrimerization and transactivation activities upon heat shock. Phosphorylated on Ser-320 by PRKACA/PKA; this phosphorylation promotes nuclear localization and transcriptional activity upon heat shock. Phosphorylated by MAPK8; this phosphorylation occurs upon heat shock, induces HSF1 translocation into nuclear stress bodies and negatively regulates transactivation activity. Neither basal nor stress-inducible phosphorylation on Ser-230, Ser-292, Ser-303, Ser-307, Ser-314, Ser-319, Ser-320, Thr-323, Ser-326, Ser-338, Ser-345, Ser-364 and Thr-365 within the regulatory domain is involved in the regulation of HSF1 subcellular localization or DNA-binding activity; however, it negatively regulates HSF1 transactivation activity. Phosphorylated on Ser-216 by PLK1 in the early mitotic period; this phosphorylation regulates HSF1 localization to the spindle pole, the recruitment of the SCF(BTRC) ubiquitin ligase complex inducing HSF1 degradation, and hence mitotic progression. Dephosphorylated on Ser-121, Ser-307, Ser-314 and Thr-323 by phosphatase PPP2CA in an IER5-dependent manner, leading to HSF1-mediated transactivation activity. In terms of processing, sumoylated with SUMO1 and SUMO2 upon heat shock in a ERK2-dependent manner. Sumoylated by SUMO1 on Lys-298; sumoylation occurs upon heat shock and promotes its localization to nuclear stress bodies and DNA-binding activity. Phosphorylation on Ser-303 and Ser-307 is probably a prerequisite for sumoylation. Post-translationally, acetylated on Lys-118; this acetylation is decreased in a IER5-dependent manner. Acetylated on Lys-118, Lys-208 and Lys-298; these acetylations occur in a EP300-dependent manner. Acetylated on Lys-80; this acetylation inhibits DNA-binding activity upon heat shock. Deacetylated on Lys-80 by SIRT1; this deacetylation increases DNA-binding activity. Ubiquitinated by SCF(BTRC) and degraded following stimulus-dependent phosphorylation at Ser-216 by PLK1 in mitosis. Polyubiquitinated. Undergoes proteasomal degradation upon heat shock and during the attenuation and recovery phase period of the heat shock response.

It is found in the nucleus. It localises to the cytoplasm. The protein resides in the nucleoplasm. Its subcellular location is the perinuclear region. The protein localises to the cytoskeleton. It is found in the spindle pole. It localises to the microtubule organizing center. The protein resides in the centrosome. Its subcellular location is the chromosome. The protein localises to the centromere. It is found in the kinetochore. Functions as a stress-inducible and DNA-binding transcription factor that plays a central role in the transcriptional activation of the heat shock response (HSR), leading to the expression of a large class of molecular chaperones, heat shock proteins (HSPs), that protect cells from cellular insult damage. In unstressed cells, is present in a HSP90-containing multichaperone complex that maintains it in a non-DNA-binding inactivated monomeric form. Upon exposure to heat and other stress stimuli, undergoes homotrimerization and activates HSP gene transcription through binding to site-specific heat shock elements (HSEs) present in the promoter regions of HSP genes. Upon heat shock stress, forms a chromatin-associated complex with TTC5/STRAP and p300/EP300 to stimulate HSR transcription, therefore increasing cell survival. Activation is reversible, and during the attenuation and recovery phase period of the HSR, returns to its unactivated form. Binds to inverted 5'-NGAAN-3' pentamer DNA sequences. Binds to chromatin at heat shock gene promoters. Activates transcription of transcription factor FOXR1 which in turn activates transcription of the heat shock chaperones HSPA1A and HSPA6 and the antioxidant NADPH-dependent reductase DHRS2. Binds the promoter region upstream of exon 1 of Mpv17l to activate expression of the M-LPS isoform which is involved in metabolism of reactive oxygen species. Also serves several other functions independently of its transcriptional activity. Involved in the repression of Ras-induced transcriptional activation of the c-fos gene in heat-stressed cells. Positively regulates pre-mRNA 3'-end processing and polyadenylation of HSP70 mRNA upon heat-stressed cells in a symplekin (SYMPK)-dependent manner. Plays a role in nuclear export of stress-induced HSP70 mRNA. Plays a role in the regulation of mitotic progression. Also plays a role as a negative regulator of non-homologous end joining (NHEJ) repair activity in a DNA damage-dependent manner. Involved in stress-induced cancer cell proliferation in a IER5-dependent manner. In Mus musculus (Mouse), this protein is Heat shock factor protein 1.